The sequence spans 322 residues: Ribosome biogenesis protein RLP7 (322 aa).

Residues 1–16 (MSSTQDSKAQTLNSNP) show a composition bias toward polar residues. Residues 1-52 (MSSTQDSKAQTLNSNPEILLRKRRNADRTRIERQELAKKKREEQIKKKRSNK) form a disordered region. The residue at position 2 (Ser-2) is an N-acetylserine. Ser-14 carries the post-translational modification Phosphoserine. A compositionally biased stretch (basic and acidic residues) spans 26–45 (ADRTRIERQELAKKKREEQI). Residue Thr-120 is modified to Phosphothreonine. Ser-278 carries the post-translational modification Phosphoserine.

Belongs to the universal ribosomal protein uL30 family.

The protein localises to the nucleus. The protein resides in the nucleolus. Functionally, involved in the biogenesis of the 60S ribosomal subunit. May act as a specificity factor that binds precursor rRNAs and tethers the enzymes that carry out the early 5' to 3' exonucleolytic reactions that generate the mature rRNAs. This chain is Ribosome biogenesis protein RLP7 (RLP7), found in Saccharomyces cerevisiae (strain ATCC 204508 / S288c) (Baker's yeast).